Reading from the N-terminus, the 431-residue chain is Foot protein 1 variant 2 (431 aa).

An N-terminal signal peptide occupies residues 1–20 (MARNMNILTLFAVLLGSASA). Tyrosine 22 carries the 3',4'-dihydroxyphenylalanine modification. Proline 33 is subject to 4-hydroxyproline. The A-1; approximate repeat unit spans residues 41–50 (VPPPAWTAWK). The tract at residues 41–270 (VPPPAWTAWK…APPPAWTAWK (230 aa)) is 13 X 10 AA A-P-P-P-A-W-T-A-W-K. Residues tryptophan 46, tryptophan 49, tryptophan 56, and tryptophan 59 each carry the 7'-hydroxytryptophan modification. 4 C-linked (Man) hydroxytryptophan glycosylation sites follow: tryptophan 46, tryptophan 49, tryptophan 56, and tryptophan 59. An A-2; approximate repeat occupies 51–60 (AHPPAWTAWK). Residues 61-70 (ATPKPWTAWK) form a B-1 repeat. The interval 61-310 (ATPKPWTAWK…ATPKPWTAWR (250 aa)) is 27 X 10 AA A-T-P-K-P-W-T-A-W-K. Position 65 is a 4-hydroxyproline (proline 65). Tryptophan 66 carries C-linked (Man) tryptophan glycosylation. Tryptophan 69 bears the 7'-hydroxytryptophan mark. A C-linked (Man) hydroxytryptophan glycan is attached at tryptophan 69. One copy of the A-3 repeat lies at 71-80 (APPPAWTAWK). 3 positions are modified to 4-hydroxyproline: proline 72, proline 73, and proline 74. Tryptophan 76 and tryptophan 79 each carry 7'-hydroxytryptophan. 2 C-linked (Man) hydroxytryptophan glycosylation sites follow: tryptophan 76 and tryptophan 79. One copy of the B-2 repeat lies at 81–90 (ATPKPWTAWK). Proline 85 carries the 4-hydroxyproline modification. Tryptophan 86 carries a C-linked (Man) tryptophan glycan. Tryptophan 89 carries the 7'-hydroxytryptophan modification. The C-linked (Man) hydroxytryptophan glycan is linked to tryptophan 89. Residues 91 to 100 (APPPTWTAWK) form an A-4; approximate repeat. 4-hydroxyproline occurs at positions 92, 93, and 94. Residues tryptophan 96 and tryptophan 99 each carry the 7'-hydroxytryptophan modification. 2 C-linked (Man) hydroxytryptophan glycosylation sites follow: tryptophan 96 and tryptophan 99. One copy of the B-3 repeat lies at 101-110 (ATPKPWTAWK). Proline 105 is subject to 4-hydroxyproline. Tryptophan 106 carries C-linked (Man) tryptophan glycosylation. Position 109 is a 7'-hydroxytryptophan (tryptophan 109). C-linked (Man) hydroxytryptophan glycosylation is present at tryptophan 109. An A-5; approximate repeat occupies 111 to 120 (APPPVWTAWK). 4-hydroxyproline occurs at positions 112, 113, and 114. 7'-hydroxytryptophan is present on residues tryptophan 116 and tryptophan 119. C-linked (Man) hydroxytryptophan glycans are attached at residues tryptophan 116 and tryptophan 119. One copy of the B-4; approximate repeat lies at 121–130 (ATPKPRTAWK). Proline 125 is subject to 4-hydroxyproline. 7'-hydroxytryptophan is present on tryptophan 129. A glycan (C-linked (Man) hydroxytryptophan) is linked at tryptophan 129. One copy of the A-6; approximate repeat lies at 131-140 (APPPTWTAWK). 4-hydroxyproline is present on residues proline 132, proline 133, and proline 134. Residues tryptophan 136 and tryptophan 139 each carry the 7'-hydroxytryptophan modification. C-linked (Man) hydroxytryptophan glycosylation is found at tryptophan 136 and tryptophan 139. The stretch at 141 to 150 (AAPKPWTAWK) is one B-5; approximate repeat. Proline 145 bears the 4-hydroxyproline mark. The C-linked (Man) tryptophan glycan is linked to tryptophan 146. Tryptophan 149 carries the post-translational modification 7'-hydroxytryptophan. The C-linked (Man) hydroxytryptophan glycan is linked to tryptophan 149. One copy of the B-6 repeat lies at 151-160 (ATPKPWTAWK). At proline 155 the chain carries 4-hydroxyproline. A C-linked (Man) tryptophan glycan is attached at tryptophan 156. Tryptophan 159 bears the 7'-hydroxytryptophan mark. Tryptophan 159 is a glycosylation site (C-linked (Man) hydroxytryptophan). Residues 161–170 (APPPAWTAWK) form an A-7 repeat. Residues proline 162, proline 163, and proline 164 each carry the 4-hydroxyproline modification. 7'-hydroxytryptophan occurs at positions 166 and 169. Residues tryptophan 166 and tryptophan 169 are each glycosylated (C-linked (Man) hydroxytryptophan). The B-7 repeat unit spans residues 171 to 180 (ATPKPWTAWK). At proline 175 the chain carries 4-hydroxyproline. C-linked (Man) tryptophan glycosylation occurs at tryptophan 176. 7'-hydroxytryptophan is present on tryptophan 179. Residue tryptophan 179 is glycosylated (C-linked (Man) hydroxytryptophan). One copy of the B-8 repeat lies at 181-190 (ATPKPWTAWK). Proline 185 is subject to 4-hydroxyproline. C-linked (Man) tryptophan glycosylation is present at tryptophan 186. Position 189 is a 7'-hydroxytryptophan (tryptophan 189). Residue tryptophan 189 is glycosylated (C-linked (Man) hydroxytryptophan). Residues 191 to 200 (ATPKPWTAWK) form a B-9 repeat. The residue at position 195 (proline 195) is a 4-hydroxyproline. A C-linked (Man) tryptophan glycan is attached at tryptophan 196. A 7'-hydroxytryptophan modification is found at tryptophan 199. The C-linked (Man) hydroxytryptophan glycan is linked to tryptophan 199. Residues 201 to 210 (ATPKPWTVWK) form a B-10; approximate repeat. At proline 205 the chain carries 4-hydroxyproline. The C-linked (Man) tryptophan glycan is linked to tryptophan 206. Position 209 is a 7'-hydroxytryptophan (tryptophan 209). Tryptophan 209 carries a C-linked (Man) hydroxytryptophan glycan. Residues 211–220 (ATPKPWTAWK) form a B-11 repeat. Residue proline 215 is modified to 4-hydroxyproline. C-linked (Man) tryptophan glycosylation is present at tryptophan 216. Tryptophan 219 carries the 7'-hydroxytryptophan modification. A C-linked (Man) hydroxytryptophan glycan is attached at tryptophan 219. The A-8 repeat unit spans residues 221–230 (APPPAWTAWK). 4-hydroxyproline is present on residues proline 222, proline 223, and proline 224. A 7'-hydroxytryptophan mark is found at tryptophan 226 and tryptophan 229. Residues tryptophan 226 and tryptophan 229 are each glycosylated (C-linked (Man) hydroxytryptophan). The B-12 repeat unit spans residues 231–240 (ATPKPWTAWK). Proline 235 bears the 4-hydroxyproline mark. C-linked (Man) tryptophan glycosylation is present at tryptophan 236. Tryptophan 239 is modified (7'-hydroxytryptophan). Tryptophan 239 carries C-linked (Man) hydroxytryptophan glycosylation. One copy of the A-9 repeat lies at 241–250 (APPPAWTAWK). Residues proline 242, proline 243, and proline 244 each carry the 4-hydroxyproline modification. 2 positions are modified to 7'-hydroxytryptophan: tryptophan 246 and tryptophan 249. 2 C-linked (Man) hydroxytryptophan glycosylation sites follow: tryptophan 246 and tryptophan 249. A B-13 repeat occupies 251–260 (ATPKPWTAWK). A 4-hydroxyproline modification is found at proline 255. A C-linked (Man) tryptophan glycan is attached at tryptophan 256. Position 259 is a 7'-hydroxytryptophan (tryptophan 259). Residue tryptophan 259 is glycosylated (C-linked (Man) hydroxytryptophan). The A-10 repeat unit spans residues 261–270 (APPPAWTAWK). Residues proline 262, proline 263, and proline 264 each carry the 4-hydroxyproline modification. Residues tryptophan 266 and tryptophan 269 each carry the 7'-hydroxytryptophan modification. 2 C-linked (Man) hydroxytryptophan glycosylation sites follow: tryptophan 266 and tryptophan 269. The B-14 repeat unit spans residues 271–280 (ATPKPWTAWK). Proline 275 is modified (4-hydroxyproline). C-linked (Man) tryptophan glycosylation is present at tryptophan 276. Residue tryptophan 279 is modified to 7'-hydroxytryptophan. Tryptophan 279 is a glycosylation site (C-linked (Man) hydroxytryptophan). Residues 281-290 (ATPKPWTAWK) form a B-15 repeat. 4-hydroxyproline is present on proline 285. C-linked (Man) tryptophan glycosylation is present at tryptophan 286. Tryptophan 289 carries the post-translational modification 7'-hydroxytryptophan. C-linked (Man) hydroxytryptophan glycosylation occurs at tryptophan 289. Residues 291-300 (ATPKPWTAWK) form a B-16 repeat. Position 295 is a 4-hydroxyproline (proline 295). Tryptophan 296 carries C-linked (Man) tryptophan glycosylation. Tryptophan 299 carries the 7'-hydroxytryptophan modification. C-linked (Man) hydroxytryptophan glycosylation occurs at tryptophan 299. A B-17; approximate repeat occupies 301-310 (ATPKPWTAWR). Residue proline 305 is modified to 4-hydroxyproline. C-linked (Man) tryptophan glycosylation is present at tryptophan 306. Tryptophan 309 bears the 7'-hydroxytryptophan mark. A glycan (C-linked (Man) hydroxytryptophan) is linked at tryptophan 309. The disordered stretch occupies residues 322-377 (GHGYGGYGKPGKPGKPGSKGPRGPAGPPGATGKTGRTGATGKRGPPGYPGKPGVPG). A compositionally biased stretch (gly residues) spans 323 to 332 (HGYGGYGKPG). The region spanning 329–380 (GKPGKPGKPGSKGPRGPAGPPGATGKTGRTGATGKRGPPGYPGKPGVPGRNG) is the Collagen-like domain. Low complexity predominate over residues 336 to 366 (KPGSKGPRGPAGPPGATGKTGRTGATGKRGP). 4-hydroxyproline is present on residues proline 367, proline 370, and proline 376.

In terms of tissue distribution, produced by the byssal gland.

It localises to the secreted. Functionally, provides adhesiveness to the mussel's foot. Mussels produce one of the strongest water insoluble glues. The mussel's adhesive is a bundle of threads, called a byssus, formed by a fibrous collagenous core coated with adhesive proteins. This Perna viridis (Asian green mussel) protein is Foot protein 1 variant 2.